The following is a 243-amino-acid chain: Small ribosomal subunit protein uS2c (243 aa).

This sequence belongs to the universal ribosomal protein uS2 family.

Its subcellular location is the plastid. The protein resides in the chloroplast. The protein is Small ribosomal subunit protein uS2c (rps2) of Cyanidium caldarium (Red alga).